Consider the following 299-residue polypeptide: Glycerol-3-phosphate dehydrogenase [NAD(P)+] (299 aa).

NADPH-binding residues include Trp-11, Arg-30, His-31, and Lys-79. The sn-glycerol 3-phosphate site is built by Lys-79, Gly-107, and Ser-109. Residue Ala-111 coordinates NADPH. Sn-glycerol 3-phosphate is bound by residues Lys-161, Asp-214, Ser-224, Arg-225, and Asn-226. Catalysis depends on Lys-161, which acts as the Proton acceptor. Residue Arg-225 participates in NADPH binding. NADPH-binding residues include Val-249 and Glu-251.

The protein belongs to the NAD-dependent glycerol-3-phosphate dehydrogenase family.

It localises to the cytoplasm. It catalyses the reaction sn-glycerol 3-phosphate + NAD(+) = dihydroxyacetone phosphate + NADH + H(+). The catalysed reaction is sn-glycerol 3-phosphate + NADP(+) = dihydroxyacetone phosphate + NADPH + H(+). It functions in the pathway membrane lipid metabolism; glycerophospholipid metabolism. Catalyzes the reduction of the glycolytic intermediate dihydroxyacetone phosphate (DHAP) to sn-glycerol 3-phosphate (G3P), the key precursor for phospholipid synthesis. The polypeptide is Glycerol-3-phosphate dehydrogenase [NAD(P)+] (Nitratiruptor sp. (strain SB155-2)).